Reading from the N-terminus, the 548-residue chain is uncharacterized protein (548 aa).

2 short-chain dehydrogenase/reductase regions span residues 1–250 (MDDR…WMSV) and 271–548 (PVED…LLSP). An NADP(+)-binding site is contributed by 12–37 (IVVTGAAGGIGRALVDIFAANGDVVV). Residue S141 coordinates substrate. Residue Y154 is the Proton acceptor of the active site. 280–304 (VIVMGGATGVGAAIARRFAENGDTV) lines the NADP(+) pocket. Y420 functions as the Proton acceptor in the catalytic mechanism.

The protein belongs to the short-chain dehydrogenases/reductases (SDR) family.

This is an uncharacterized protein from Sinorhizobium fredii (strain NBRC 101917 / NGR234).